The chain runs to 106 residues: Large ribosomal subunit protein uL24 (106 aa).

The segment at 1 to 20 (MNKRAKSKNREPLRKSPVKR) is disordered. Residues 8–20 (KNREPLRKSPVKR) show a composition bias toward basic and acidic residues.

Belongs to the universal ribosomal protein uL24 family. As to quaternary structure, part of the 50S ribosomal subunit.

In terms of biological role, one of two assembly initiator proteins, it binds directly to the 5'-end of the 23S rRNA, where it nucleates assembly of the 50S subunit. One of the proteins that surrounds the polypeptide exit tunnel on the outside of the subunit. In Methylacidiphilum infernorum (isolate V4) (Methylokorus infernorum (strain V4)), this protein is Large ribosomal subunit protein uL24.